A 275-amino-acid chain; its full sequence is MSSYSSNIDRLQREIARLKADDSREMSKEKQAQSKAHKAQQAISSAKSLSTQKSKMSELERATRDGAAIGKKRADIAKKIADKAKQLSSYQAKQFKADEQAVKKVAQEQKRLSDERTKHEAFIKQSLSSMRTTASATMEAEEEYDFFISHASEDKEAFVQDLVAALRDLGAKIFYDAYTLKVGDSLRRKIDQGLANSKFGIVVLSEHFFSKQWPARELDGLTAMEIGGQTRILPIWHKVSYDEVRRFSPSLADKVALNTSLKSVEEIAKELHSLI.

A compositionally biased stretch (basic and acidic residues) spans 17–32 (RLKADDSREMSKEKQA). Residues 17-66 (RLKADDSREMSKEKQAQSKAHKAQQAISSAKSLSTQKSKMSELERATRDG) form a disordered region. Residues 39–48 (AQQAISSAKS) show a composition bias toward low complexity. The span at 55-64 (KMSELERATR) shows a compositional bias: basic and acidic residues. In terms of domain architecture, TIR spans 142–275 (EEYDFFISHA…EIAKELHSLI (134 aa)). NAD(+) is bound by residues 151-152 (AS) and lysine 181. Glutamate 217 is a catalytic residue.

As to quaternary structure, homodimer. Interacts with host TIRAP, and probably host MYD88. Interacts with host TLR4, abolishes the interaction of host TIRAP with TLR4.

It localises to the secreted. The protein resides in the host cell membrane. It catalyses the reaction NAD(+) + H2O = ADP-D-ribose + nicotinamide + H(+). The enzyme catalyses NAD(+) = 2'cADPR + nicotinamide + H(+). In terms of biological role, virulence factor that interferes with host Toll-like receptor 2 (TLR2) and TLR4 signaling, resulting in the reduction of dendritic cell maturation, inhibition of pro-inflammatory cytokine secretion and impaired NF-kappa-B activation in macrophages. Binds host lipids. Has NAD(+) hydrolase (NADase) activity, catalyzes cleavage of NAD(+) into ADP-D-ribose (ADPR) and nicotinamide, also generates a cyclization variant of cyclic ADPR (cADPR), termed v-cADPR (probably 2'cADPR). The sequence is that of Probable 2' cyclic ADP-D-ribose synthase TcpB (tcpB) from Brucella melitensis biotype 2 (strain ATCC 23457).